Here is a 944-residue protein sequence, read N- to C-terminus: UvrABC system protein A (944 aa).

33 to 40 (GLSGSGKS) provides a ligand contact to ATP. The segment at 252 to 279 (CPICGFSIGELEPRMFSFNSPFGACPTC) adopts a C4-type zinc-finger fold. ABC transporter domains follow at residues 309-587 (WEPT…KKSL) and 607-935 (ITDR…QYLK). Residue 639–646 (GVSGSGKS) coordinates ATP. Residues 738–764 (CEACKGDGIIKIEMHFLPDVYVPCEVC) form a C4-type zinc finger.

This sequence belongs to the ABC transporter superfamily. UvrA family. In terms of assembly, forms a heterotetramer with UvrB during the search for lesions.

It is found in the cytoplasm. Its function is as follows. The UvrABC repair system catalyzes the recognition and processing of DNA lesions. UvrA is an ATPase and a DNA-binding protein. A damage recognition complex composed of 2 UvrA and 2 UvrB subunits scans DNA for abnormalities. When the presence of a lesion has been verified by UvrB, the UvrA molecules dissociate. The protein is UvrABC system protein A of Staphylococcus epidermidis (strain ATCC 35984 / DSM 28319 / BCRC 17069 / CCUG 31568 / BM 3577 / RP62A).